A 242-amino-acid polypeptide reads, in one-letter code: Small ribosomal subunit protein uS2 (242 aa).

Belongs to the universal ribosomal protein uS2 family.

The chain is Small ribosomal subunit protein uS2 from Neisseria meningitidis serogroup B (strain ATCC BAA-335 / MC58).